We begin with the raw amino-acid sequence, 170 residues long: ATP synthase subunit b (170 aa).

Residues 30–50 (FFFVLAIFLVVLGVIGTFVVP) form a helical membrane-spanning segment.

The protein belongs to the ATPase B chain family. As to quaternary structure, F-type ATPases have 2 components, F(1) - the catalytic core - and F(0) - the membrane proton channel. F(1) has five subunits: alpha(3), beta(3), gamma(1), delta(1), epsilon(1). F(0) has three main subunits: a(1), b(2) and c(10-14). The alpha and beta chains form an alternating ring which encloses part of the gamma chain. F(1) is attached to F(0) by a central stalk formed by the gamma and epsilon chains, while a peripheral stalk is formed by the delta and b chains.

It localises to the cell membrane. In terms of biological role, f(1)F(0) ATP synthase produces ATP from ADP in the presence of a proton or sodium gradient. F-type ATPases consist of two structural domains, F(1) containing the extramembraneous catalytic core and F(0) containing the membrane proton channel, linked together by a central stalk and a peripheral stalk. During catalysis, ATP synthesis in the catalytic domain of F(1) is coupled via a rotary mechanism of the central stalk subunits to proton translocation. Component of the F(0) channel, it forms part of the peripheral stalk, linking F(1) to F(0). This Mycobacterium leprae (strain TN) protein is ATP synthase subunit b.